A 44-amino-acid polypeptide reads, in one-letter code: Protein PsbN (44 aa).

The chain crosses the membrane as a helical span at residues 6–26 (FFFTIFVWFLLISVTGYSIYV).

This sequence belongs to the PsbN family.

The protein resides in the plastid. It is found in the chloroplast thylakoid membrane. Its function is as follows. May play a role in photosystem I and II biogenesis. The polypeptide is Protein PsbN (Bigelowiella natans (Pedinomonas minutissima)).